Reading from the N-terminus, the 364-residue chain is D-alanine--D-alanine ligase (364 aa).

The ATP-grasp domain occupies 140 to 346; it reads KKLALLEGIP…YSQLIDKLIS (207 aa). 173 to 228 lines the ATP pocket; it reads ESEFSYPVFVKPANSGSSVGISKAKDREDLVLAIHEAFLYDTKILIEQAINAREIE. Residues D299, E313, and N315 each contribute to the Mg(2+) site.

It belongs to the D-alanine--D-alanine ligase family. The cofactor is Mg(2+). It depends on Mn(2+) as a cofactor.

It is found in the cytoplasm. It carries out the reaction 2 D-alanine + ATP = D-alanyl-D-alanine + ADP + phosphate + H(+). Its pathway is cell wall biogenesis; peptidoglycan biosynthesis. Its function is as follows. Cell wall formation. The sequence is that of D-alanine--D-alanine ligase from Caldicellulosiruptor bescii (strain ATCC BAA-1888 / DSM 6725 / KCTC 15123 / Z-1320) (Anaerocellum thermophilum).